The following is a 550-amino-acid chain: Chaperonin GroEL (550 aa).

ATP contacts are provided by residues 30-33 (TLGP), lysine 51, 87-91 (DGTTT), glycine 415, and aspartate 495.

The protein belongs to the chaperonin (HSP60) family. Forms a cylinder of 14 subunits composed of two heptameric rings stacked back-to-back. Interacts with the co-chaperonin GroES.

Its subcellular location is the cytoplasm. The catalysed reaction is ATP + H2O + a folded polypeptide = ADP + phosphate + an unfolded polypeptide.. Together with its co-chaperonin GroES, plays an essential role in assisting protein folding. The GroEL-GroES system forms a nano-cage that allows encapsulation of the non-native substrate proteins and provides a physical environment optimized to promote and accelerate protein folding. This Dechloromonas aromatica (strain RCB) protein is Chaperonin GroEL.